Reading from the N-terminus, the 2009-residue chain is Sodium channel protein type 1 subunit alpha (2009 aa).

The Cytoplasmic segment spans residues 1–128; the sequence is MEQTVLVPPG…KIAIKILVHS (128 aa). The segment covering 28–48 has biased composition (basic and acidic residues); that stretch reads RIAEEKAKNPKPDKKDDDENG. Residues 28–60 are disordered; it reads RIAEEKAKNPKPDKKDDDENGPKPNSDLEAGKN. One copy of the I repeat lies at 110–454; the sequence is ILTPFNPLRK…QQMIEQLKKQ (345 aa). A helical transmembrane segment spans residues 129–146; it reads LFSMLIMCTILTNCVFMT. The Extracellular segment spans residues 147-152; it reads MSNPPD. Residues 153-177 traverse the membrane as a helical segment; that stretch reads WTKNVEYTFTGIYTFESLIKIIARG. The Cytoplasmic portion of the chain corresponds to 178 to 188; the sequence is FCLEDFTFLRD. Residues 189–205 form a helical membrane-spanning segment; it reads PWNWLDFTVITFAYVTE. Topologically, residues 206–213 are extracellular; sequence FVDLGNVS. A glycan (N-linked (GlcNAc...) asparagine) is linked at asparagine 211. Residues 214–235 traverse the membrane as a helical segment; that stretch reads ALRTFRVLRALKTISVIPGLKT. Residues 236–245 are Cytoplasmic-facing; that stretch reads IVGALIQSVK. The helical transmembrane segment at 246–269 threads the bilayer; that stretch reads KLSDVMILTVFCLSVFALIGLQLF. Residues 270–369 are Extracellular-facing; sequence MGNLRNKCIQ…YGYTSFDTFS (100 aa). Intrachain disulfides connect cysteine 277–cysteine 345 and cysteine 336–cysteine 351. Residues asparagine 284, asparagine 295, asparagine 301, asparagine 306, and asparagine 338 are each glycosylated (N-linked (GlcNAc...) asparagine). Residues 370–384 constitute an intramembrane region (pore-forming); the sequence is WAFLSLFRLMTQDFW. Residues 385-397 are Extracellular-facing; it reads ENLYQLTLRAAGK. Residues 398–423 traverse the membrane as a helical segment; that stretch reads TYMIFFVLVIFLGSFYLINLILAVVA. Over 424–768 the chain is Cytoplasmic; that stretch reads MAYEEQNQAT…HVVNLVVMDP (345 aa). Residues 455–529 form a disordered region; sequence QEAAQQAATA…FQKSESEDSI (75 aa). The span at 456–466 shows a compositional bias: low complexity; that stretch reads EAAQQAATATA. Serine 470 is modified (phosphoserine). Residues 479–492 are compositionally biased toward low complexity; it reads LSDSSSEASKLSSK. The segment covering 495–506 has biased composition (basic residues); it reads KERRNRRKKRKQ. Over residues 520–529 the composition is skewed to basic and acidic residues; it reads FQKSESEDSI. Serine 523, serine 525, serine 550, serine 551, serine 607, and serine 730 each carry phosphoserine. The interval 584 to 627 is disordered; it reads VGSENDFADDEHSTFEDNESRRDSLFVPRRHGERRNSNLSQTSR. Positions 593–607 are enriched in basic and acidic residues; that stretch reads DEHSTFEDNESRRDS. The stretch at 750 to 1022 is one II repeat; the sequence is CSPYWLKVKH…QIAVDRMHKG (273 aa). Residues 769–787 traverse the membrane as a helical segment; the sequence is FVDLAITICIVLNTLFMAM. Residues 788–797 lie on the Extracellular side of the membrane; that stretch reads EHYPMTDHFN. The helical transmembrane segment at 798–820 threads the bilayer; sequence NVLTVGNLVFTGIFTAEMFLKII. Residues 821–830 are Cytoplasmic-facing; sequence AMDPYYYFQE. Residues 831-849 form a helical membrane-spanning segment; that stretch reads GWNIFDGFIVTLSLVELGL. The Extracellular segment spans residues 850-854; sequence ANVEG. A helical transmembrane segment spans residues 855-874; it reads LSVLRSFRLLRVFKLAKSWP. At 875–891 the chain is on the cytoplasmic side; the sequence is TLNMLIKIIGNSVGALG. The chain crosses the membrane as a helical span at residues 892-912; the sequence is NLTLVLAIIVFIFAVVGMQLF. Topologically, residues 913 to 938 are extracellular; that stretch reads GKSYKDCVCKIASDCQLPRWHMNDFF. A disulfide bridge links cysteine 921 with cysteine 927. The pore-forming intramembrane region spans 939-952; the sequence is HSFLIVFRVLCGEW. The Extracellular segment spans residues 953–965; the sequence is IETMWDCMEVAGQ. Cysteine 959 and cysteine 968 form a disulfide bridge. The chain crosses the membrane as a helical span at residues 966 to 992; the sequence is AMCLTVFMMVMVIGNLVVLNLFLALLL. Residues 993–1218 are Cytoplasmic-facing; it reads SSFSADNLAA…RTCFRIVEHN (226 aa). The segment at 1129 to 1163 is disordered; it reads TEDFSSESDLEESKEKLNESSSSSEGSTVDIGAPV. One copy of the III repeat lies at 1200–1514; the sequence is RGKQWWNLRR…KKYYNAMKKL (315 aa). Residues 1219-1237 form a helical membrane-spanning segment; sequence WFETFIVFMILLSSGALAF. Residues 1238–1250 are Extracellular-facing; that stretch reads EDIYIDQRKTIKT. The helical transmembrane segment at 1251–1276 threads the bilayer; the sequence is MLEYADKVFTYIFILEMLLKWVAYGY. Topologically, residues 1277 to 1278 are cytoplasmic; that stretch reads QT. The helical transmembrane segment at 1279–1304 threads the bilayer; that stretch reads YFTNAWCWLDFLIVDVSLVSLTANAL. At 1305–1313 the chain is on the extracellular side; that stretch reads GYSELGAIK. Residues 1314–1332 form a helical membrane-spanning segment; it reads SLRTLRALRPLRALSRFEG. Residues 1333-1345 lie on the Cytoplasmic side of the membrane; sequence MRVVVNALLGAIP. Residues 1346 to 1369 form a helical membrane-spanning segment; sequence SIMNVLLVCLIFWLIFSIMGVNLF. The Extracellular segment spans residues 1370-1415; the sequence is AGKFYHCINTTTGDRFDIEDVNNHTDCLKLIERNETARWKNVKVNF. Cysteine 1376 and cysteine 1396 are joined by a disulfide. Asparagine 1378, asparagine 1392, and asparagine 1403 each carry an N-linked (GlcNAc...) asparagine glycan. Positions 1416–1433 form an intramembrane region, pore-forming; the sequence is DNVGFGYLSLLQVATFKG. At 1434 to 1457 the chain is on the extracellular side; sequence WMDIMYAAVDSRNVELQPKYEESL. The helical transmembrane segment at 1458–1483 threads the bilayer; sequence YMYLYFVIFIIFGSFFTLNLFIGVII. Residues 1484–1541 are Cytoplasmic-facing; that stretch reads DNFNQQKKKFGGQDIFMTEEQKKYYNAMKKLGSKKPQKPIPRPGNKFQGMVFDFVTRQ. Serine 1516 carries the post-translational modification Phosphoserine; by PKC. An IV repeat occupies 1523–1821; sequence IPRPGNKFQG…WEKFDPDATQ (299 aa). A helical transmembrane segment spans residues 1542–1560; that stretch reads VFDISIMILICLNMVTMMV. The Extracellular segment spans residues 1561–1571; it reads ETDDQSEYVTT. The segment at 1561-1571 is S1-S2 loop of repeat IV; it reads ETDDQSEYVTT. A helical transmembrane segment spans residues 1572-1593; the sequence is ILSRINLVFIVLFTGECVLKLI. At 1594 to 1601 the chain is on the cytoplasmic side; the sequence is SLRHYYFT. The chain crosses the membrane as a helical span at residues 1602 to 1623; it reads IGWNIFDFVVVILSIVGMFLAE. The interval 1619 to 1636 is S3b-S4 loop of repeat IV; it reads MFLAELIEKYFVSPTLFR. Residues 1624–1636 are Extracellular-facing; that stretch reads LIEKYFVSPTLFR. Residues 1637–1655 form a helical membrane-spanning segment; the sequence is VIRLARIGRILRLIKGAKG. The Cytoplasmic segment spans residues 1656–1665; it reads IRTLLFALMM. The chain crosses the membrane as a helical span at residues 1666–1688; the sequence is SLPALFNIGLLLFLVMFIYAIFG. Over 1689–1711 the chain is Extracellular; the sequence is MSNFAYVKREVGIDDMFNFETFG. Positions 1712–1726 form an intramembrane region, pore-forming; it reads NSMICLFQITTSAGW. Residues 1727-1759 lie on the Extracellular side of the membrane; it reads DGLLAPILNSKPPDCDPNKVNPGSSVKGDCGNP. Cysteines 1741 and 1756 form a disulfide. The chain crosses the membrane as a helical span at residues 1760–1788; the sequence is SVGIFFFVSYIIISFLVVVNMYIAVILEN. The Cytoplasmic segment spans residues 1789-2009; sequence FSVATEESAE…EGKDEKAKGK (221 aa). The region spanning 1915–1944 is the IQ domain; sequence EEVSAVIIQRAYRRHLLKRTVKQASFTYNK. Residues 1986 to 2009 form a disordered region; that stretch reads YDRVTKPIVEKHEQEGKDEKAKGK. Over residues 1988-2009 the composition is skewed to basic and acidic residues; sequence RVTKPIVEKHEQEGKDEKAKGK.

The protein belongs to the sodium channel (TC 1.A.1.10) family. Nav1.1/SCN1A subfamily. As to quaternary structure, the Nav1.1 voltage-gated sodium channel consists of an ion-conducting alpha subunit SCN1A which is functional on its own regulated by one or more beta-1 (SCN1B), beta-2 (SCN2B), beta-3 (SCN3B) and beta-4 (SCN4B) subunits. SCN1B and SCN3B are non-covalently associated with SCN1A. SCN2B and SCN4B are disulfide-linked to SCN1A. SCN1B regulates both the expression at the plasma membrane and the voltage dependence of Nav1.1 inactivation. SCN3B and SCN4B reduce Nav1.1 conductance. Probably interacts with TMEM233; modulates the gating properties of NaV1.1. Interacts with FGF13; regulates the steady-state inactivation of Nav.1.1. Post-translationally, phosphorylation at Ser-1516 by PKC in a highly conserved cytoplasmic loop slows inactivation of the sodium channel and reduces peak sodium currents.

It localises to the cell membrane. The enzyme catalyses Na(+)(in) = Na(+)(out). Its activity is regulated as follows. Activated by the spider toxins Hm1a and Hm1b (H.maculata, AC P60992 and AC P0DOC5) eliciting acute pain and mechanical allodynia. Inhibited by the conotoxin GVIIJ. Inhibited by the spider beta/delta-theraphotoxin-Pre1a. In terms of biological role, pore-forming subunit of Nav1.1, a voltage-gated sodium (Nav) channel that directly mediates the depolarizing phase of action potentials in excitable membranes. Navs, also called VGSCs (voltage-gated sodium channels) or VDSCs (voltage-dependent sodium channels), operate by switching between closed and open conformations depending on the voltage difference across the membrane. In the open conformation they allow Na(+) ions to selectively pass through the pore, along their electrochemical gradient. The influx of Na(+) ions provokes membrane depolarization, initiating the propagation of electrical signals throughout cells and tissues. By regulating the excitability of neurons, ensures that they respond appropriately to synaptic inputs, maintaining the balance between excitation and inhibition in brain neural circuits. Nav1.1 plays a role in controlling the excitability and action potential propagation from somatosensory neurons, thereby contributing to the sensory perception of mechanically-induced pain. In Homo sapiens (Human), this protein is Sodium channel protein type 1 subunit alpha.